The sequence spans 452 residues: Pre-mRNA-splicing factor prp46 (452 aa).

The span at 61 to 70 shows a compositional bias: low complexity; it reads AAKQAQAAAA. Residues 61-129 form a disordered region; it reads AAKQAQAAAA…SATRQQPPEW (69 aa). Over residues 114 to 125 the composition is skewed to polar residues; sequence SLIQRPSATRQQ. WD repeat units follow at residues 141–180, 183–222, 225–264, 267–308, 310–349, 350–388, and 399–438; these read GHLG…LRLT, GHIS…VIRH, GHLS…NIHV, GHTG…GVLT, HKKG…QNFE, GHNA…RYQT, and EAEA…TPET. Residues 432 to 452 form a disordered region; it reads DQATPETHPVTWAPTLGRQRY.

This sequence belongs to the WD repeat PRL1/PRL2 family. In terms of assembly, associated with the spliceosome.

It localises to the cytoplasm. It is found in the nucleus. Its function is as follows. Involved in pre-mRNA splicing and required for cell cycle progression at G2/M. This is Pre-mRNA-splicing factor prp46 (prp46) from Emericella nidulans (strain FGSC A4 / ATCC 38163 / CBS 112.46 / NRRL 194 / M139) (Aspergillus nidulans).